Reading from the N-terminus, the 310-residue chain is HTH-type transcriptional activator TtdR (310 aa).

The region spanning proline 6–threonine 63 is the HTH lysR-type domain. Positions phenylalanine 23–glutamine 42 form a DNA-binding region, H-T-H motif.

Belongs to the LysR transcriptional regulatory family.

In terms of biological role, positive regulator required for L-tartrate-dependent anaerobic growth on glycerol. Induces expression of the ttdA-ttdB-ygjE operon. This chain is HTH-type transcriptional activator TtdR (ttdR), found in Escherichia coli O6:H1 (strain CFT073 / ATCC 700928 / UPEC).